The following is a 479-amino-acid chain: Phosphatidylinositol 4-kinase type 2-alpha (479 aa).

The residue at position 1 (M1) is an N-acetylmethionine. A disordered region spans residues 1–58; that stretch reads MDETSPLVSPERAQPPEYTFPSGSGAHFPQVPGGAVRVAAAAGSGPSPPCSPGHDRER. Residues S5, S9, S44, S47, and S51 each carry the phosphoserine modification. The segment covering 31–45 has biased composition (low complexity); it reads VPGGAVRVAAAAGSG. The PI3K/PI4K catalytic domain maps to 124–453; sequence SIYPERIYQG…VQMPPVIVET (330 aa). A G-loop region spans residues 130-136; it reads IYQGSSG. ATP-binding positions include 131–137 and K152; that span reads YQGSSGS. The interval 157-159 is important for substrate binding; it reads EPY. Residues 165–178 form an important for interaction with membranes region; that stretch reads KWTKWLQKLCCPCC. S-palmitoyl cysteine attachment occurs at residues C174, C175, C177, and C178. Position 261–264 (261–264) interacts with ATP; it reads QLFV. The tract at residues 268–276 is important for interaction with membranes; the sequence is KDADYWLRR. The segment at 305 to 313 is catalytic loop; sequence RNTDRGNDN. Positions 344–364 are activation loop; the sequence is AIDNGLAFPLKHPDSWRAYPF. D346 lines the ATP pocket. Positions 359-368 are important for interaction with membranes; sequence WRAYPFYWAW. Phosphoserine is present on S462.

Belongs to the PI3/PI4-kinase family. Type II PI4K subfamily. Associates with the BLOC-1 and the AP-3 complexes; the BLOC-1 complex is required for optimal binding of PI4K2A to the AP-3 complex. Interacts with BLOC1S5 and DTNBP1. Interacts with ITCH. Interacts with FOS; this interaction may enhance phosphatidylinositol phosphorylation activity. Interacts with ATG9A. In terms of processing, palmitoylated by ZDHHC3 and ZDHHC7 in the CCPCC motif. Palmitoylation is cholesterol-dependent, and required for TGN localization. Post-translationally, ubiquitinated by ITCH; this does not lead to proteasomal degradation. Detected in brain (at protein level).

Its subcellular location is the golgi apparatus. The protein localises to the trans-Golgi network membrane. It localises to the membrane raft. The protein resides in the endosome. It is found in the endosome membrane. Its subcellular location is the cytoplasmic vesicle. The protein localises to the cell projection. It localises to the dendrite. The protein resides in the presynaptic cell membrane. It is found in the synapse. Its subcellular location is the synaptosome. The protein localises to the mitochondrion. It localises to the membrane. The protein resides in the cell membrane. It is found in the perikaryon. Its subcellular location is the neuron projection. The catalysed reaction is a 1,2-diacyl-sn-glycero-3-phospho-(1D-myo-inositol) + ATP = a 1,2-diacyl-sn-glycero-3-phospho-(1D-myo-inositol 4-phosphate) + ADP + H(+). Its function is as follows. Membrane-bound phosphatidylinositol-4 kinase (PI4-kinase) that catalyzes the phosphorylation of phosphatidylinositol (PI) to phosphatidylinositol 4-phosphate (PI4P), a lipid that plays important roles in endocytosis, Golgi function, protein sorting and membrane trafficking and is required for prolonged survival of neurons. Besides, phosphorylation of phosphatidylinositol (PI) to phosphatidylinositol 4-phosphate (PI4P) is the first committed step in the generation of phosphatidylinositol 4,5-bisphosphate (PIP2), a precursor of the second messenger inositol 1,4,5-trisphosphate (InsP3). This chain is Phosphatidylinositol 4-kinase type 2-alpha (Pi4k2a), found in Mus musculus (Mouse).